Here is a 211-residue protein sequence, read N- to C-terminus: MIRATSVKGQHRWSEAAADTVVLDFDDRHRRRTAMVGTRGLQFLLDLEHAVALRGGDALVLEDGRLVEVVAAAEPLIEIRGSDPKELVRIAWHLGNRHLPTQIMAKGLRIRRDHVIEEMVQGLGAKTVEIEAPFDPEGGAYAPPAEPSHDHAGHDHAHDSHAHHDHDHGKHAQHDHGKHDHAHHDHAAHDDHHVHDEHCGHDHHGHGHEHK.

A disordered region spans residues Phe134–Lys211. Residues Pro147–Asp202 show a composition bias toward basic and acidic residues.

The protein belongs to the UreE family.

The protein localises to the cytoplasm. Its function is as follows. Involved in urease metallocenter assembly. Binds nickel. Probably functions as a nickel donor during metallocenter assembly. This Rhodopseudomonas palustris (strain BisB18) protein is Urease accessory protein UreE.